We begin with the raw amino-acid sequence, 481 residues long: Matrix metalloproteinase-20 (481 aa).

The N-terminal stretch at 1–20 (MLPASGLAVLLVTALKFSTA) is a signal peptide. A propeptide spanning residues 21–105 (APSLPAASPR…PRCGVPDVAN (85 aa)) is cleaved from the precursor. N64 is a glycosylation site (N-linked (GlcNAc...) asparagine). Positions 96–103 (PRCGVPDV) match the Cysteine switch motif. Residue C98 participates in Zn(2+) binding. E162, A163, and D164 together coordinate Ca(2+). Positions 174 and 176 each coordinate Zn(2+). Residues D181, G182, R184, and T186 each coordinate Ca(2+). H189 is a Zn(2+) binding site. Ca(2+)-binding residues include E195, G196, G198, and D200. H202 provides a ligand contact to Zn(2+). Ca(2+) is bound by residues D204 and E207. Residue H224 participates in Zn(2+) binding. The active site involves E225. Residues H228 and H234 each coordinate Zn(2+). Hemopexin repeat units follow at residues 291–341 (PDLC…FPQL), 342–387 (MSNV…GFPR), 389–437 (VQRI…FSGV), and 438–481 (NGQI…WIGC). Cysteines 294 and 481 form a disulfide. An N-linked (GlcNAc...) asparagine glycan is attached at N297.

It belongs to the peptidase M10A family. It depends on Zn(2+) as a cofactor. Ca(2+) is required as a cofactor. Post-translationally, autoactivates at least at the 105-Asn-|-Tyr-106 site. In terms of tissue distribution, expressed in the enamel organ.

It is found in the secreted. The protein localises to the extracellular space. Its subcellular location is the extracellular matrix. Degrades amelogenin, the major protein component of the enamel matrix and two of the macromolecules characterizing the cartilage extracellular matrix: aggrecan and the cartilage oligomeric matrix protein (COMP). May play a central role in tooth enamel formation. Cleaves aggrecan at the '360-Ser-|-Phe-361' site. The polypeptide is Matrix metalloproteinase-20 (MMP20) (Bos taurus (Bovine)).